We begin with the raw amino-acid sequence, 2228 residues long: MNMSRQGIFQTVGSGLDHILSLADVEEEQMIQSVDRTAVTGASYFTSVDQSSVHTAEVGAHQSEPLKTSVDKPGSKRTQGEKFFLIHSADWLTTHALFHEVAKLDVVKLLYNEQFAVQGLLRYHTYARFGIEIQVQINPTPFQQGGLICAMVPGDQSYGSIASLTVYPHGLLNCNINNVVRIKVPFIYTRGAYHFKDPQYPVWELTIRVWSELNIGTGTSAYTSLNVLARFTDLELHGLTPLSTQMMRNEFRVSTTENVVNLSNYEDARAKMSFALDQEDWKSDASQGGGIKITHFTTWTSIPTLAAQFPFNASDSVGQQIKVIPVDPYFFQMTNTNPEQKCITALASICQMFCFWRGDLVFDFQVFPTKYHSGRLLFCFVPGNELIDVSHITLKQATTAPCAVMDITGVQSTLRFRVPWISDTPYRVNRYTKSSHQKGEYTAIGKLIVYCYNRLTSPSNVASHVRVNVYLSAINLECFAPLYHAMDVTTQVGDDSGGFSTTVSTKQNVPDPQVGITTVRDLKGKANQGKMDVSGVQAPVGAITTIEDPVLAKKVPETFPELKPGESRHTSDHMSIYKFMGRSHFLCTFTFNSNNKEYTFPITLSSTSNPPHGLPSTLRWFFNLFQLYRGPLDLTIIITGATDVDGMAWFTPVGLAVDTPWVEKESALSIDYKTALGAVRFNTRRTGNIQIRLPWYSYLYAVSGALDGLGDKTDSTFGLVSIQIANYNHSDEYLSFSCYLSVTEQSEFYFPRAPLNTNAMMSSETMLDRIALGDLESSVDDPRSEEDRKFESHIEKRKPYKELRLEVGKQRLKYAQEELSNEVLPPPRKIKGVFSQAKISLFYTEDHEIMKFSWKGITADTRALRRFGFSLAAGRSVWTLEMDAGVLTGRLVRVNDEKWTEMKDDKIVSLVEKFTSNKHWSKINFPHGMLDLEEIAANSKEFPNMSETDLCFLLHWLNPKKINLADRMLGMSGIQEIKEKGVGLIGECRAFLDSITTTLKSMMFGFHHSVTVEIINTVLCFVKSGILLYVIQQLNQEEHSHIIGLLRVMNYADIGCSVISCGKVFSKMLETVFNWQMDSRMMELRTQSISNWLRDICSGITIFKSFKDAIYWLYTRIREYYDVNYGNKKDVLNILKDNQQKIERAIEEADNFCVLQIQDVEKFEQYQKGVDLIQKLRTVHSMAQVDPGLTVHLAPLRDCIARVHQKLKNLGSINQAMVTRCEPVVCYLYGKRGGGKSLTSIALATKICKHYGVEPEKNIYTKPVASDYWDGYSGQLVCIIDDIGQNTTDEDWSDFCQLVSGCPMRLNMASLEEKGRHFSSPFIIATSNWSNPSPKTVYVKEAIDRRLHFKVEVKPASFFKNPHNDMLNVNLAKTNDAIKDMSCVDLVMDSHNISLSELLSSLVMTVEIRKQNMSEFMELWSQGMSDDDNDSAVAEFFQSFPSGEPSGSKLSRFFQSVTNHKWVAVGAAVGVLGVLVGGWYVYKHFTKKKEEPIPSEGVYHGVTKPKQVIKLDADPVESQSTLEIAGLVRKNLVQFGVGEKNGCVRWVMNALGIKDDWLLVPSHAYKFEKDYEMMEFYFNRGGTYYSISAGNVVIQSLDVGFQDVVLMKVPTIPKFRDITEHFIKKSDVPRALNRLATLVTTVNGTPMLISEGPLKMEEKATYVHKKNDGTTIDLTVDQAWRGKGEGLPGMCGGALISSNQSIQNAILGIHVAGGNSILVAKLVTQEMFQNIDKKIVESQRIMKVEFTQCSMNVVSKTLFKKSPIHHHIDKNMINFPAVMPFSRAEIDPMAVMLSKYSLPIVDEPEDYKDVSVFFQNKILGKSPLVDDFLDIEMAITGAPGIDAINMDSSPGYPYVQEKLTKRDLIWLDDNGMFLGVHPRLAQRILFNTTMMENCSDLDVVFTTCPKDELRPLDKVLESKTRAIDSCPLDYTILCRMYWGPAISYFHLNPGFHTGVAIGIDPDRQWDQLFKTMIRFGDVGLDLDFSAFDASLSPFMIREAGRILTEMSGAPNHFGEALINTIIYSKHLLYNCCYHVYGSMPSGSPCTALLNSIINNVNLYYVFSKIFKKSPVFFCDAIRILCYGDDVLIVFSRQVQFDNLDSIGQRIVDEFRKLGMTATSADKSVPQLKPVSELTFLKRSFNLVDDRIRPAIAEKTIWSLVAWQRSNAEFEQNLENAQWFAFMHGYEFYQDFYHFVQSCLEKEMIEYRLKSYDWWRMKFNDQCFVCDLS.

A disordered region spans residues A56 to K76. 2 consecutive short sequence motifs ((L)YPX(n)L motif) follow at residues Y167–L171 and Y200–L205. The segment at M766–Q836 is involved in P1-2A pentamerization. Residues T1011–I1031 traverse the membrane as a helical segment. The interval I1043–E1070 is membrane-penetrating ability. Positions N1127–F1152 form a coiled coil. The SF3 helicase domain maps to H1204 to M1366. G1230–S1237 contacts ATP. Residues W1462 to Y1482 form a helical membrane-spanning segment. Y1499 is modified (O-(5'-phospho-RNA)-tyrosine). The Peptidase C3 domain maps to D1514 to F1728. Residues H1563, D1603, and C1691 each act as for protease 3C activity in the active site. A RdRp catalytic domain is found at D1977 to N2098.

It belongs to the picornaviridae polyprotein family. Homodimer. Homomultimer; probably interacts with membranes in a multimeric form. Seems to assemble into amyloid-like fibers. In terms of assembly, homodimer. Monomer. Interacts with protein 3CD. As to quaternary structure, interacts with host ACBD3. Interacts with protein 3AB. In terms of assembly, interacts with human MAVS. As to quaternary structure, homodimer; disulfide-linked. Homopentamer. Homooligomer. In terms of assembly, interacts with capsid protein VP2. Interacts with capsid protein VP3. As to quaternary structure, interacts with capsid protein VP1. Interacts with capsid protein VP3. Interacts with capsid protein VP1. Interacts with capsid protein VP2. Specific enzymatic cleavages by viral protease in vivo yield a variety of precursors and mature proteins. Polyprotein processing intermediates are produced, such as P1-2A which is a functional precursor of the structural proteins, VP0 which is a VP4-VP2 precursor, VP1-2A precursor, 3ABC precursor which is a stable and catalytically active precursor of 3A, 3B and 3C proteins, 3AB and 3CD precursors. The assembly signal 2A is removed from VP1-2A by a host protease, possibly host Cathepsin L. This cleavage occurs over a region of 3 amino-acids probably generating VP1 proteins with heterogeneous C-termini. In terms of processing, during virion maturation, immature virions are rendered infectious following cleavage of VP0 into VP4 and VP2. This maturation seems to be an autocatalytic event triggered by the presence of RNA in the capsid and is followed by a conformational change of the particle. Post-translationally, the assembly signal 2A is removed from VP1-2A by a host protease, possibly host Cathepsin L in naked virions. This cleavage does not occur in enveloped virions. This cleavage occurs over a region of 3 amino-acids probably generating VP1 proteins with heterogeneous C-termini. VPg is uridylylated prior to priming replication into VPg-pUpU. In terms of processing, unlike other picornaviruses, does not seem to be myristoylated.

The protein resides in the virion. It is found in the host endosome. The protein localises to the host multivesicular body. Its subcellular location is the host membrane. It localises to the host mitochondrion outer membrane. The protein resides in the host cytoplasm. It is found in the host cytoplasmic vesicle membrane. The catalysed reaction is RNA(n) + a ribonucleoside 5'-triphosphate = RNA(n+1) + diphosphate. It carries out the reaction a ribonucleoside 5'-triphosphate + H2O = a ribonucleoside 5'-diphosphate + phosphate + H(+). It catalyses the reaction Selective cleavage of Gln-|-Gly bond in the poliovirus polyprotein. In other picornavirus reactions Glu may be substituted for Gln, and Ser or Thr for Gly.. Its function is as follows. Capsid proteins VP1, VP2, and VP3 form a closed capsid enclosing the viral positive strand RNA genome. All these proteins contain a beta-sheet structure called beta-barrel jelly roll. Together they form an icosahedral capsid (T=3) composed of 60 copies of each VP1, VP2, and VP3, with a diameter of approximately 300 Angstroms. VP1 is situated at the 12 fivefold axes, whereas VP2 and VP3 are located at the quasi-sixfold axes. The naked capsid interacts with the host receptor HAVCR1 to provide virion attachment to and probably entry into the target cell. Functionally, VP0 precursor is a component of the immature procapsids. In terms of biological role, plays a role in the assembly of the 12 pentamers into an icosahedral structure. Has not been detected in mature virions, supposedly owing to its small size. Precursor component of immature procapsids that corresponds to an extended form of the structural protein VP1. After maturation, possibly by the host Cathepsin L, the assembly signal 2A is cleaved to give rise to the mature VP1 protein. Its function is as follows. Functions as a viroporin. Affects membrane integrity and causes an increase in membrane permeability. Involved in host intracellular membrane rearrangements probably to give rise to the viral factories. Does not disrupt calcium homeostasis or glycoprotein trafficking. Antagonizes the innate immune response of the host by suppressing IFN-beta synthesis, which it achieves by interfering with the RIG-I/IFIH1 pathway. Functionally, affects membrane integrity and causes an increase in membrane permeability. In terms of biological role, associates with and induces structural rearrangements of intracellular membranes. Displays RNA-binding activity. The precursor 3ABC is targeted to the mitochondrial membrane where protease 3C activity cleaves and inhibits the host antiviral protein MAVS, thereby disrupting activation of IRF3 through the IFIH1/MDA5 pathway. In vivo, the protease activity of 3ABC precursor is more efficient in cleaving the 2BC precursor than that of protein 3C. The 3ABC precursor may therefore play a role in the proteolytic processing of the polyprotein. Possible viroporin. Its function is as follows. Interacts with the 3CD precursor and with RNA structures found at both the 5'- and 3'-termini of the viral genome. Since the 3AB precursor contains the hydrophobic domain 3A, it probably anchors the whole viral replicase complex to intracellular membranes on which viral RNA synthesis occurs. Functionally, may serve as membrane anchor to the 3AB and 3ABC precursors via its hydrophobic domain. May interact with RNA. In terms of biological role, acts as a primer for viral RNA replication and remains covalently bound to viral genomic RNA. VPg is uridylylated prior to priming replication into VPg-pUpU. The VPg-pUpU is then used as primer on the genomic RNA poly(A) by the RNA-dependent RNA polymerase to replicate the viral genome. Cysteine protease that generates mature viral proteins from the precursor polyprotein. In addition to its proteolytic activity, it binds to viral RNA, and thus influences viral genome replication. RNA and substrate bind cooperatively to the protease. Cleaves IKBKG/NEMO to impair innate immune signaling. Cleaves host PABPC1 which may participate in the switch of viral translation to RNA synthesis. Its function is as follows. Interacts with the 3AB precursor and with RNA structures found at both the 5'- and 3'-termini of the viral genome. Disrupts TLR3 signaling by degrading the host adapter protein TICAM1/TRIF. Functionally, RNA-directed RNA polymerase 3D-POL replicates genomic and antigenomic RNA by recognizing replications specific signals. The protein is Genome polyprotein of Cercopithecus hamlyni (Owl-faced monkey).